The sequence spans 409 residues: Bone morphogenetic protein 4 (409 aa).

Positions 1 to 19 are cleaved as a signal peptide; that stretch reads MIPGNRMLMVVLLCQVLLG. A propeptide spanning residues 20–293 is cleaved from the precursor; sequence GASHASLIPE…ALTRRRRAKR (274 aa). Phosphoserine is present on Ser91. Positions 91-110 are disordered; the sequence is SGEEEEEEQMPSGGLEYPER. Asn144, Asn209, Asn351, and Asn366 each carry an N-linked (GlcNAc...) asparagine glycan. 3 disulfides stabilise this stretch: Cys309-Cys374, Cys338-Cys406, and Cys342-Cys408.

Belongs to the TGF-beta family. In terms of assembly, homodimer; disulfide-linked. Interacts with GREM2. Part of a complex consisting of TWSG1 and CHRD. Interacts with the serine proteases, HTRA1 and HTRA3; the interaction with either inhibits BMP4-mediated signaling. The HTRA protease activity is required for this inhibition. Interacts with SOSTDC1. Interacts with FBN1 (via N-terminal domain) and FBN2. Interacts with type I receptor BMPR1A. Interacts with type II receptor BMPR2. Interacts with FSTL1; this interaction inhibits the activation of the BMP4/Smad1/5/8 signaling pathway. Interacts with SCUBE3. Interacts with TGFBR3.

The protein localises to the secreted. It is found in the extracellular space. The protein resides in the extracellular matrix. Growth factor of the TGF-beta superfamily that plays essential roles in many developmental processes, including neurogenesis, vascular development, angiogenesis and osteogenesis. Acts in concert with PTHLH/PTHRP to stimulate ductal outgrowth during embryonic mammary development and to inhibit hair follicle induction. Initiates the canonical BMP signaling cascade by associating with type I receptor BMPR1A and type II receptor BMPR2. Once all three components are bound together in a complex at the cell surface, BMPR2 phosphorylates and activates BMPR1A. In turn, BMPR1A propagates signal by phosphorylating SMAD1/5/8 that travel to the nucleus and act as activators and repressors of transcription of target genes. Positively regulates the expression of odontogenic development regulator MSX1 via inducing the IPO7-mediated import of SMAD1 to the nucleus. Required for MSX1-mediated mesenchymal molar tooth bud development beyond the bud stage, via promoting Wnt signaling. Acts as a positive regulator of odontoblast differentiation during mesenchymal tooth germ formation, expression is repressed during the bell stage by MSX1-mediated inhibition of CTNNB1 signaling. Able to induce its own expression in dental mesenchymal cells and also in the neighboring dental epithelial cells via an MSX1-mediated pathway. Can also signal through non-canonical BMP pathways such as ERK/MAP kinase, PI3K/Akt, or SRC cascades. For example, induces SRC phosphorylation which, in turn, activates VEGFR2, leading to an angiogenic response. The chain is Bone morphogenetic protein 4 (BMP4) from Oryctolagus cuniculus (Rabbit).